Here is a 474-residue protein sequence, read N- to C-terminus: Rhodanese-like domain-containing protein 7 (474 aa).

Disordered stretches follow at residues 20-68 and 179-198; these read SSPP…SSLK and VSPEQEAIHHGHSSSSPLAA. Residues 53–68 are compositionally biased toward low complexity; it reads QSQPHKLSSSPSSSLK. Positions 245 to 368 constitute a Rhodanese domain; the sequence is SDPETVVIDV…YLEEVPKTES (124 aa). The active-site Cysteine persulfide intermediate is the Cys-328. The segment at 432 to 474 is disordered; that stretch reads RARARQTQFEEWGVIGGPDKGRRPATKPDSPRKKINAKLGSSI.

This chain is Rhodanese-like domain-containing protein 7 (STR7), found in Arabidopsis thaliana (Mouse-ear cress).